A 5537-amino-acid polypeptide reads, in one-letter code: Histone-lysine N-methyltransferase 2D (5537 aa).

Residues 1–60 (MDSQKLAGEDKDSEPAADGPAASEDPSATESDLPNPHVGEVSVLSSGSPRLQETPQDCSG) form a disordered region. Serine 27 carries the phosphoserine modification. A compositionally biased stretch (polar residues) spans 43–57 (VLSSGSPRLQETPQD). A C2HC pre-PHD-type 1; degenerate zinc finger spans residues 104–149 (GPNEAVLPSEDLSQIGFPEGLTPAHLGEPGGSCWAHHWCAAWSAGV). 3 consecutive PHD-type zinc fingers follow at residues 170–218 (QRCS…PEHS), 226–276 (EARC…CKVC), and 273–323 (CKVC…CRVC). Residues 229-274 (CAVCEGPGELCDLFFCTSCGHHYHGACLDTALTARKRAGWQCPECK) form an RING-type 1; atypical zinc finger. The RING-type 2; degenerate zinc-finger motif lies at 276 to 321 (CQACRKPGNDSKMLVCETCDKGYHTFCLKPPMEELPAHSWKCKACR). Disordered regions lie at residues 368–387 (VCSR…EPDA), 393–416 (QGQP…QCEA), 436–1331 (EEMP…RLKS), and 1340–1359 (VVAD…DDDT). The 15 X 5 AA repeats of S/P-P-P-E/P-E/A stretch occupies residues 439 to 668 (PLLPPPEESP…VSRLSPPPEE (230 aa)). Positions 440 to 473 (LLPPPEESPLSPPPEESPTSPPPEASRLSPPPEE) are enriched in pro residues. A run of 3 repeats spans residues 442–446 (PPPEE), 460–464 (PPPEA), and 469–473 (PPPEE). The span at 474–483 (LPASPLPEAL) shows a compositional bias: low complexity. Residues 494–509 (LSPPPEESPLSPPPES) show a composition bias toward pro residues. A run of 2 repeats spans residues 496–500 (PPPEE) and 504–508 (SPPPE). A compositionally biased stretch (low complexity) spans 510–519 (SPFSPLEESP). 2 stretches are compositionally biased toward pro residues: residues 520 to 547 (LSPP…PLSP) and 554 to 595 (LSPP…PPPE). 5 consecutive repeat copies span residues 521-525 (SPPEE), 555-559 (SPPPE), 564-568 (SPPPE), 573-577 (SPPPE), and 582-586 (SPPPE). Low complexity predominate over residues 596–607 (ASRLFPPFEESP). Residues 608 to 649 (LSPPPEESPLSPPPEASRLSPPPEDSPMSPPPEESPMSPPPE) are compositionally biased toward pro residues. A run of 4 repeats spans residues 609–613 (SPPPE), 618–622 (SPPPE), 627–631 (SPPPE), and 645–649 (SPPPE). A compositionally biased stretch (low complexity) spans 650–662 (VSRLSPLPVVSRL). Repeat 15 spans residues 663–667 (SPPPE). Pro residues predominate over residues 663-712 (SPPPEESPLSPPPEESPTSPPPEASRLSPPPEDSPTSPPPEDSPASPPPE). Residues 713 to 725 (DSLMSLPLEESPL) show a composition bias toward low complexity. Serine 744 carries the post-translational modification Phosphoserine. 2 stretches are compositionally biased toward basic and acidic residues: residues 745-760 (PRPE…EEPH) and 845-869 (RPEE…KPPE). 2 stretches are compositionally biased toward low complexity: residues 889-903 (PSLS…LSEP) and 911-928 (LPEE…LSPQ). A compositionally biased stretch (pro residues) spans 929-940 (LMPPDPLPPPLS). The span at 941-954 (PIITAAAPPALSPL) shows a compositional bias: low complexity. Pro residues predominate over residues 994–1008 (EPVPPMILPPSPGSP). The span at 1048-1057 (PLSVPSPLSP) shows a compositional bias: low complexity. Basic and acidic residues predominate over residues 1068-1080 (AELHEMETEKVSE). At serine 1151 the chain carries Phosphoserine. Threonine 1195 carries the post-translational modification Phosphothreonine. Residues 1207 to 1216 (EISNLSQGDA) show a composition bias toward polar residues. Position 1249 is a phosphoserine (serine 1249). Phosphothreonine is present on threonine 1267. Residue serine 1270 is modified to Phosphoserine. Composition is skewed to basic residues over residues 1289–1302 (GRRR…RIKQ) and 1310–1329 (GRRR…RARL). PHD-type zinc fingers lie at residues 1377-1430 (QDMC…CIVC), 1427-1477 (CIVC…CVSC), and 1504-1559 (LVTC…CQPY). Residues 1507 to 1557 (CPICHAPYVEEDLLIQCRHCERWMHAGCESLFTEDDVEQAADEGFDCVSCQ) form an RING-type 3; atypical zinc finger. At serine 1606 the chain carries Phosphoserine. 4 disordered regions span residues 1610–1767 (KRRQ…LEDM), 1793–1889 (GVGR…MESK), 1904–2002 (EQHL…NQRS), and 2165–2683 (PQVP…QRQR). Over residues 1637–1666 (PDDKKDGDLDTDELLKGEGGVEHMECEIKL) the composition is skewed to basic and acidic residues. Serine 1671 is subject to Phosphoserine. A compositionally biased stretch (basic and acidic residues) spans 1675 to 1685 (EPGKEETEESK). Basic residues-rich tracts occupy residues 1702 to 1712 (RQRKSHTRTKK) and 1753 to 1762 (KQQRRGRKKS). 2 stretches are compositionally biased toward basic and acidic residues: residues 1806 to 1825 (AKGD…KGDD) and 1832 to 1841 (EESRGLEGKA). 2 positions are modified to phosphoserine: serine 1820 and serine 1834. Threonine 1843 and threonine 1865 each carry phosphothreonine. Positions 1874–1889 (DLDRISTEELPKMESK) are enriched in basic and acidic residues. The span at 1979–1990 (TTPSTPTTPTTE) shows a compositional bias: low complexity. Pro residues predominate over residues 2190 to 2209 (PTAPPTYPPYPSPTGAPAQP). At serine 2239 the chain carries Phosphoserine. Threonine 2240 is modified (phosphothreonine). Residue lysine 2246 is modified to N6-acetyllysine. A phosphoserine mark is found at serine 2260 and serine 2274. The segment covering 2280–2292 (ESRKALEVKKEEL) has biased composition (basic and acidic residues). A phosphoserine mark is found at serine 2309, serine 2311, and serine 2342. 2 stretches are compositionally biased toward pro residues: residues 2350 to 2365 (QEPP…PPSH) and 2379 to 2393 (AQPP…PPPE). 2 stretches are compositionally biased toward low complexity: residues 2409–2431 (SRVP…RPLS) and 2494–2505 (FPAALPAGPAGE). Arginine 2535 carries the asymmetric dimethylarginine modification. Residues 2547–2560 (LKPPVPQPGLPPPH) are compositionally biased toward pro residues. The span at 2574–2584 (KPQSTNYTVAT) shows a compositional bias: polar residues. Low complexity predominate over residues 2589 to 2609 (PSGSPLGPSSGSTGESYGLSP). Over residues 2610–2621 (LRPPSVLPPPAP) the composition is skewed to pro residues. Serine 2640 is subject to Phosphoserine. Residues 2669–2707 (MSGLSQTELEKQRQRQRLRELLIRQQIQRNTLRQEKETA) adopt a coiled-coil conformation. Positions 2686-2690 (LRELL) match the LXXLL motif 1 motif. Disordered stretches follow at residues 2697-2814 (RNTL…QQQQ) and 2835-2996 (ARFP…LDDD). Over residues 2707–2722 (AAAAAGAVGPPGSWGA) the composition is skewed to low complexity. Composition is skewed to polar residues over residues 2733–2746 (SRGQ…QDKS) and 2781–2790 (PSSMDVNSRQ). The residue at position 2836 (arginine 2836) is an Asymmetric dimethylarginine. Positions 2931 to 2940 (PQKPSAPPAP) are enriched in pro residues. Residues 3038 to 3042 (LDDLL) carry the LXXLL motif 2 motif. Residues 3078–3110 (EKAEREALLRGVEPGPLGPEERPPPAADASEPR) form a disordered region. Position 3079 is an N6-acetyllysine (lysine 3079). Position 3130 is a phosphoserine (serine 3130). 2 disordered regions span residues 3147-3209 (ANSL…GSSL) and 3263-3339 (KQQL…AHAL). A Phosphothreonine modification is found at threonine 3197. Composition is skewed to low complexity over residues 3198 to 3209 (PSPLSGPGGSSL), 3263 to 3289 (KQQL…LSAP), and 3301 to 3320 (GSSP…LAGA). Serine 3199 is modified (phosphoserine). Positions 3249–3282 (IEDLLEHEKKELQKKQQLSAQLQPAQQQQQQQQQ) form a coiled coil. The segment covering 3325 to 3334 (LPQPLMPTQP) has biased composition (pro residues). At lysine 3433 the chain carries N6-acetyllysine. Disordered regions lie at residues 3462–3499 (LSGG…TFAQ) and 3596–3673 (RNKQ…GPFL). The stretch at 3562-3614 (EKLKLVTEQQSKIQKQLDQVRKQQKEHTNLMAEYRNKQQQQQQQQQQQQQQHS) forms a coiled coil. Composition is skewed to low complexity over residues 3599 to 3612 (QQQQ…QQQQ) and 3631 to 3643 (LPGQ…GLQP). Residues 3714–3750 (RLLQERQLQLQQQRMQLAQKLQQQQQQQQQQQHLLGQ) adopt a coiled-coil conformation. Residue arginine 3727 is modified to Asymmetric dimethylarginine. The tract at residues 3758–3802 (QQGPGVQTNQALGPKPQGLMPPSSHQGLLVQQLSPQPPQGPQGML) is disordered. Residues 3897–3975 (LQQLQQQQQL…FQQQQQQQQM (79 aa)) adopt a coiled-coil conformation. Residues 3984-4191 (LLSPQQQQQQ…GQGLPGVGIM (208 aa)) form a disordered region. The span at 4012-4023 (PGALGPTLLLTG) shows a compositional bias: low complexity. A compositionally biased stretch (polar residues) spans 4024-4045 (KEQNTVDPAVSSEATEGPSTHQ). The span at 4073 to 4108 (SQLLLVQPQPQPQPSSLQLQPPLRLPGQQQQQVSLL) shows a compositional bias: low complexity. The span at 4111 to 4120 (AGGGSHGQLG) shows a compositional bias: gly residues. A compositionally biased stretch (polar residues) spans 4137 to 4154 (PSVSLGDQPGSMTQNLLG). Position 4198 is an asymmetric dimethylarginine (arginine 4198). Serine 4215 is modified (phosphoserine). The LXXLL motif 3 signature appears at 4222–4226 (LQALL). Disordered stretches follow at residues 4233–4398 (QSQA…VPGH) and 4410–4452 (ASQL…LLLA). Over residues 4237–4251 (VRQTPPYQEPGTQTS) the composition is skewed to polar residues. The span at 4252-4282 (PLQGLLGCQPQLGGFPGPQTGPLQELGAGPR) shows a compositional bias: low complexity. Residues 4253–4257 (LQGLL) carry the LXXLL motif 4 motif. Over residues 4283 to 4293 (PQGPPRLPAPP) the composition is skewed to pro residues. Composition is skewed to low complexity over residues 4294–4305 (GALSTGPVLGPV) and 4320–4331 (PSQLPSPSSQLP). Residues 4338–4357 (PTHPGTPKPQGPTLEPPPGR) are compositionally biased toward pro residues. The residue at position 4359 (serine 4359) is a Phosphoserine. Positions 4463-4467 (LQKLL) match the LXXLL motif 5 motif. An N6-acetyllysine modification is found at lysine 4465. Disordered stretches follow at residues 4503–4544 (QGTP…KEDG) and 4613–4727 (KNNL…HLGS). Pro residues predominate over residues 4619–4633 (PPTPPSSLPPTPPPS). Positions 4648–4673 (LGEHPKDAASARDSERALRDTSEVKS) are enriched in basic and acidic residues. At serine 4738 the chain carries Phosphoserine. Residue lysine 4756 forms a Glycyl lysine isopeptide (Lys-Gly) (interchain with G-Cter in SUMO2) linkage. N6-acetyllysine is present on lysine 4776. Phosphoserine occurs at positions 4822 and 4849. Positions 4822–4857 (SPARAGTEPKKGEAEGPGGKEKGLEGKSPDTGPDWL) are disordered. A compositionally biased stretch (basic and acidic residues) spans 4828–4849 (TEPKKGEAEGPGGKEKGLEGKS). A Glycyl lysine isopeptide (Lys-Gly) (interchain with G-Cter in SUMO2) cross-link involves residue lysine 4880. A disordered region spans residues 4905–4980 (QLSAPPPEEP…GEDSRPPRLK (76 aa)). Over residues 4908 to 4931 (APPPEEPSPPPSPLAPSPASPPTE) the composition is skewed to pro residues. The segment covering 4932 to 4941 (PLVELPTEPL) has biased composition (low complexity). Basic and acidic residues predominate over residues 4966 to 4976 (RPPEEGEDSRP). Positions 4990–4994 (LRLLL) match the LXXLL motif 6 motif. The C2HC pre-PHD-type 2 zinc finger occupies 5029-5069 (MRRCCFCHEEGDGATDGPARLLNLDLDLWVHLNCALWSTEV). A PHD-type 7 zinc finger spans residues 5090–5137 (TKCSLCQRTGATSSCNRMRCPNVYHFACAIRAKCMFFKDKTMLCPMHK). Residues 5175–5235 (LHMFRVGGLV…CCYRCSIGEN (61 aa)) enclose the FYR N-terminal domain. The region spanning 5236–5321 (NGRPEFVIKV…ESCQNYLFRY (86 aa)) is the FYR C-terminal domain. A WDR5 interaction motif (WIN) motif is present at residues 5337–5342 (GCARSE). One can recognise an SET domain in the interval 5397–5513 (NNVYLARSRI…KGEELTYDYQ (117 aa)). S-adenosyl-L-methionine-binding positions include tyrosine 5451 and 5474-5475 (NH). Residues cysteine 5477, cysteine 5525, cysteine 5527, and cysteine 5532 each contribute to the Zn(2+) site. The Post-SET domain occupies 5521 to 5537 (HKIPCHCGAWNCRKWMN).

This sequence belongs to the class V-like SAM-binding methyltransferase superfamily. Histone-lysine methyltransferase family. TRX/MLL subfamily. As to quaternary structure, component of the MLL2 complex (also named ASCOM complex), at least composed of catalytic subunit KMT2D/MLL2, ASH2L, RBBP5, WDR5, NCOA6, DPY30, KDM6A, PAXIP1/PTIP, PAGR1 and alpha- and beta-tubulin. Forms a core complex with the evolutionary conserved subcomplex WRAD composed of WDR5, RBBP5, ASH2L/ASH2 and DPY30 subunits; WRAD differentially stimulates the methyltransferase activity. Interacts with ESR1; interaction is direct. Interacts (via WIN motif) with WDR5. Expressed in most adult tissues, including a variety of hematoipoietic cells, with the exception of the liver.

The protein resides in the nucleus. It carries out the reaction L-lysyl(4)-[histone H3] + S-adenosyl-L-methionine = N(6)-methyl-L-lysyl(4)-[histone H3] + S-adenosyl-L-homocysteine + H(+). Its function is as follows. Histone methyltransferase that catalyzes methyl group transfer from S-adenosyl-L-methionine to the epsilon-amino group of 'Lys-4' of histone H3 (H3K4). Part of chromatin remodeling machinery predominantly forms H3K4me1 methylation marks at active chromatin sites where transcription and DNA repair take place. Acts as a coactivator for estrogen receptor by being recruited by ESR1, thereby activating transcription. This is Histone-lysine N-methyltransferase 2D (KMT2D) from Homo sapiens (Human).